The primary structure comprises 228 residues: PKHD-type hydroxylase RPE_4577 (228 aa).

In terms of domain architecture, Fe2OG dioxygenase spans T78–S180. Residues H98, D100, and H161 each contribute to the Fe cation site. Residue R171 coordinates 2-oxoglutarate.

It depends on Fe(2+) as a cofactor. L-ascorbate serves as cofactor.

The polypeptide is PKHD-type hydroxylase RPE_4577 (Rhodopseudomonas palustris (strain BisA53)).